Consider the following 338-residue polypeptide: UDP-glucose 4-epimerase (338 aa).

NAD(+)-binding positions include tyrosine 11 to isoleucine 12, aspartate 31 to serine 36, aspartate 58 to isoleucine 59, phenylalanine 80 to lysine 84, asparagine 99, serine 124, tyrosine 149, lysine 153, and phenylalanine 178. Substrate is bound by residues serine 124 and tyrosine 149. Tyrosine 149 acts as the Proton acceptor in catalysis. Residues asparagine 179, asparagine 199–leucine 200, alanine 216–phenylalanine 218, arginine 231, arginine 292–aspartate 295, and tyrosine 299 each bind substrate.

This sequence belongs to the NAD(P)-dependent epimerase/dehydratase family. In terms of assembly, homodimer. NAD(+) is required as a cofactor.

The enzyme catalyses UDP-alpha-D-glucose = UDP-alpha-D-galactose. It participates in carbohydrate metabolism; galactose metabolism. In terms of biological role, involved in the metabolism of galactose. Catalyzes the conversion of UDP-galactose (UDP-Gal) to UDP-glucose (UDP-Glc) through a mechanism involving the transient reduction of NAD. This is UDP-glucose 4-epimerase (galE) from Yersinia pestis.